Here is a 286-residue protein sequence, read N- to C-terminus: Tyrosine recombinase Tlet_1492 (286 aa).

The region spanning 1–86 (MERILQNFSD…SLRSFFNYLQ (86 aa)) is the Core-binding (CB) domain. The region spanning 107–280 (RIPDFLLPSE…VDQEKFDAIN (174 aa)) is the Tyr recombinase domain. Catalysis depends on residues Arg-143, Lys-168, His-232, Arg-235, and His-258. Tyr-267 serves as the catalytic O-(3'-phospho-DNA)-tyrosine intermediate.

This sequence belongs to the 'phage' integrase family.

The protein localises to the cytoplasm. In terms of biological role, site-specific tyrosine recombinase, which acts by catalyzing the cutting and rejoining of the recombining DNA molecules. In Pseudothermotoga lettingae (strain ATCC BAA-301 / DSM 14385 / NBRC 107922 / TMO) (Thermotoga lettingae), this protein is Tyrosine recombinase Tlet_1492.